Consider the following 77-residue polypeptide: Small ribosomal subunit protein bS18 (77 aa).

This sequence belongs to the bacterial ribosomal protein bS18 family. In terms of assembly, part of the 30S ribosomal subunit. Forms a tight heterodimer with protein bS6.

Binds as a heterodimer with protein bS6 to the central domain of the 16S rRNA, where it helps stabilize the platform of the 30S subunit. The polypeptide is Small ribosomal subunit protein bS18 (Bacillus cereus (strain ATCC 10987 / NRS 248)).